Reading from the N-terminus, the 172-residue chain is MALESLFKSIHTKTSLSSSIVFIFKGKACLLTSKSRIQESFAELNSFTSLVLLIENHVLLHAREAVNEVQVVNDSSWDELVIGSETPVLVDFWAPWCGPCRMIAPIIDELAKEYAGKIKCYKLNTDESPNTATKYGIRSIPTVLFFKNGERKDSVIGAVPKATLSEKVEKYI.

A chloroplast-targeting transit peptide spans 1–60 (MALESLFKSIHTKTSLSSSIVFIFKGKACLLTSKSRIQESFAELNSFTSLVLLIENHVLL). The Thioredoxin domain maps to 61–172 (HAREAVNEVQ…TLSEKVEKYI (112 aa)). Active-site nucleophile residues include C97 and C100. C97 and C100 are disulfide-bonded.

Belongs to the thioredoxin family. Plant M-type subfamily. Forms a complex with heterodimeric ferredoxin-thioredoxin reductase (FTR) and ferredoxin.

It localises to the plastid. The protein resides in the chloroplast. Participates in various redox reactions through the reversible oxidation of the active center dithiol to a disulfide. The M form is known to activate NADP-malate dehydrogenase. The protein is Thioredoxin M-type, chloroplastic of Pisum sativum (Garden pea).